The chain runs to 639 residues: Uridine permease (639 aa).

Residues 1 to 37 (MPVSDSGFDNSSKTMKDDTIPTEDYEEITKESEMGDA) form a disordered region. Over 1–162 (MPVSDSGFDN…LQLGLNWWQT (162 aa)) the chain is Cytoplasmic. Thr-54 is modified (phosphothreonine). At Ser-56 the chain carries Phosphoserine. The chain crosses the membrane as a helical span at residues 163–180 (WICIWVGYTFVAFFLILG). Over 181 to 200 (SKVGNNYHISFPISSRVSFG) the chain is Extracellular. The helical transmembrane segment at 201–225 (IYFSIWIVINRVVMACVWNSTLAYI) threads the bilayer. The Cytoplasmic segment spans residues 226-259 (GSQCVQLMLKAIFGTNLNTRIKDTIKNPNLTNFE). A helical transmembrane segment spans residues 260 to 276 (FMCFMVFWVACLPFLWF). At 277 to 283 (PPDKLRH) the chain is on the extracellular side. A helical transmembrane segment spans residues 284–305 (IFALKSAITPFAAFGFLIWTLC). Over 306 to 367 (KAKGHLALGS…KTYKSSVYSQ (62 aa)) the chain is Cytoplasmic. The chain crosses the membrane as a helical span at residues 368–392 (LIALPVCYAIISLIGILSVSAAYTL). The Extracellular segment spans residues 393-416 (YGVNYWSPLDILNRYLDNYTSGNR). Residues 417-435 (AGVFLISFIFAFDQLGANL) form a helical membrane-spanning segment. Over 436–460 (SGNSIPAGTDLTALLPKFINIRRGS) the chain is Cytoplasmic. A helical transmembrane segment spans residues 461–477 (YICALISLAICPWDLLS). Residues 478-483 (SSSKFT) lie on the Extracellular side of the membrane. Residues 484–507 (TALAAYAVFLSAIAGVISADYFIV) traverse the membrane as a helical segment. Over 508–537 (RKGYVNIFHCYTDKPGSYYMYNKYGTNWRA) the chain is Cytoplasmic. A helical transmembrane segment spans residues 538-562 (VVAYIFGIAPNFAGFLGSVGVSVPI). Over 563–572 (GAMKVYYLNY) the chain is Extracellular. The chain crosses the membrane as a helical span at residues 573-590 (FVGYLLAALSYCILVYFY). The Cytoplasmic segment spans residues 591–639 (PIKGIPGDAKITDRKWLEEWVEVEEFGTEREAFEEYGGVSTGYEKIRYI). A Glycyl lysine isopeptide (Lys-Gly) (interchain with G-Cter in ubiquitin) cross-link involves residue Lys-635.

This sequence belongs to the purine-cytosine permease (2.A.39) family.

The protein resides in the membrane. Its function is as follows. High-affinity transport of uridine. This Saccharomyces cerevisiae (strain ATCC 204508 / S288c) (Baker's yeast) protein is Uridine permease (FUI1).